Consider the following 164-residue polypeptide: Transcription antitermination protein NusB (164 aa).

It belongs to the NusB family.

Involved in transcription antitermination. Required for transcription of ribosomal RNA (rRNA) genes. Binds specifically to the boxA antiterminator sequence of the ribosomal RNA (rrn) operons. This Desulfovibrio desulfuricans (strain ATCC 27774 / DSM 6949 / MB) protein is Transcription antitermination protein NusB.